The following is a 348-amino-acid chain: Protein RecA (348 aa).

Residue 69-76 (GPESSGKT) participates in ATP binding.

It belongs to the RecA family.

It is found in the cytoplasm. Functionally, can catalyze the hydrolysis of ATP in the presence of single-stranded DNA, the ATP-dependent uptake of single-stranded DNA by duplex DNA, and the ATP-dependent hybridization of homologous single-stranded DNAs. It interacts with LexA causing its activation and leading to its autocatalytic cleavage. The chain is Protein RecA from Picosynechococcus sp. (strain ATCC 27264 / PCC 7002 / PR-6) (Agmenellum quadruplicatum).